Consider the following 214-residue polypeptide: GTP-binding nuclear protein GSP1/Ran (214 aa).

One can recognise a Small GTPase Ran-type domain in the interval 4–168; sequence EVPTFKLVLV…LWLARKLAGN (165 aa). Position 15–22 (15–22) interacts with GTP; it reads DGGTGKTT. The tract at residues 34 to 42 is switch-I; the sequence is KKYIATIGV. Residues Gly65, 119–122, and 147–149 each bind GTP; these read NKVD and SAK. The tract at residues 65–81 is switch-II; the sequence is GQEKFGGLRDGYYINAQ.

It belongs to the small GTPase superfamily. Ran family. Found in a nuclear export complex with RanGTP, exportin and pre-miRNA.

Its subcellular location is the nucleus. In terms of biological role, GTP-binding protein involved in nucleocytoplasmic transport. Required for the import of protein into the nucleus and also for RNA export. Involved in chromatin condensation and control of cell cycle. The protein is GTP-binding nuclear protein GSP1/Ran (GSP1) of Candida glabrata (strain ATCC 2001 / BCRC 20586 / JCM 3761 / NBRC 0622 / NRRL Y-65 / CBS 138) (Yeast).